The sequence spans 127 residues: Glycine cleavage system H protein (127 aa).

The region spanning 22–104 is the Lipoyl-binding domain; the sequence is QVVIGITHFA…YEGAWMVKVE (83 aa). Position 63 is an N6-lipoyllysine (K63).

This sequence belongs to the GcvH family. As to quaternary structure, the glycine cleavage system is composed of four proteins: P, T, L and H. (R)-lipoate is required as a cofactor.

Its function is as follows. The glycine cleavage system catalyzes the degradation of glycine. The H protein shuttles the methylamine group of glycine from the P protein to the T protein. Functionally, is also involved in protein lipoylation via its role as an octanoyl/lipoyl carrier protein intermediate. The chain is Glycine cleavage system H protein from Bacillus cytotoxicus (strain DSM 22905 / CIP 110041 / 391-98 / NVH 391-98).